A 43-amino-acid polypeptide reads, in one-letter code: Bacteriocin leucocin-C (43 aa).

Cysteines 9 and 14 form a disulfide.

The protein localises to the secreted. In terms of biological role, inhibits a wide spectrum of lactic acid bacteria. The protein is Bacteriocin leucocin-C of Leuconostoc mesenteroides.